Consider the following 268-residue polypeptide: Tryptophan synthase alpha chain (268 aa).

Residues glutamate 49 and aspartate 60 each act as proton acceptor in the active site.

The protein belongs to the TrpA family. As to quaternary structure, tetramer of two alpha and two beta chains.

It carries out the reaction (1S,2R)-1-C-(indol-3-yl)glycerol 3-phosphate + L-serine = D-glyceraldehyde 3-phosphate + L-tryptophan + H2O. Its pathway is amino-acid biosynthesis; L-tryptophan biosynthesis; L-tryptophan from chorismate: step 5/5. In terms of biological role, the alpha subunit is responsible for the aldol cleavage of indoleglycerol phosphate to indole and glyceraldehyde 3-phosphate. This Edwardsiella ictaluri (strain 93-146) protein is Tryptophan synthase alpha chain.